A 287-amino-acid polypeptide reads, in one-letter code: Bifunctional protein FolD (287 aa).

Residues 166-168 and Ile232 contribute to the NADP(+) site; that span reads GAS.

Belongs to the tetrahydrofolate dehydrogenase/cyclohydrolase family. Homodimer.

The catalysed reaction is (6R)-5,10-methylene-5,6,7,8-tetrahydrofolate + NADP(+) = (6R)-5,10-methenyltetrahydrofolate + NADPH. It carries out the reaction (6R)-5,10-methenyltetrahydrofolate + H2O = (6R)-10-formyltetrahydrofolate + H(+). The protein operates within one-carbon metabolism; tetrahydrofolate interconversion. Its function is as follows. Catalyzes the oxidation of 5,10-methylenetetrahydrofolate to 5,10-methenyltetrahydrofolate and then the hydrolysis of 5,10-methenyltetrahydrofolate to 10-formyltetrahydrofolate. The protein is Bifunctional protein FolD of Chromohalobacter salexigens (strain ATCC BAA-138 / DSM 3043 / CIP 106854 / NCIMB 13768 / 1H11).